A 398-amino-acid chain; its full sequence is NADH dehydrogenase [ubiquinone] iron-sulfur protein 2 (398 aa).

[4Fe-4S] cluster contacts are provided by cysteine 261, cysteine 267, and cysteine 282.

Belongs to the complex I 49 kDa subunit family. As to quaternary structure, complex I is composed of about 45 different subunits. This is a component of the iron-sulfur (IP) fragment of the enzyme. It depends on [4Fe-4S] cluster as a cofactor.

It localises to the mitochondrion. It catalyses the reaction a ubiquinone + NADH + 5 H(+)(in) = a ubiquinol + NAD(+) + 4 H(+)(out). In terms of biological role, core subunit of the mitochondrial membrane respiratory chain NADH dehydrogenase (Complex I) that is believed to belong to the minimal assembly required for catalysis. Complex I functions in the transfer of electrons from NADH to the respiratory chain. The immediate electron acceptor for the enzyme is believed to be ubiquinone. Component of the iron-sulfur (IP) fragment of the enzyme. The sequence is that of NADH dehydrogenase [ubiquinone] iron-sulfur protein 2 (NAD7) from Nephroselmis olivacea (Green alga).